Here is a 762-residue protein sequence, read N- to C-terminus: uncharacterized protein (762 aa).

Positions 334–542 (IIDILSNYLI…SDEEIAEHIL (209 aa)) constitute an MCM domain. An ATP-binding site is contributed by 384–391 (TDPGIGKS).

It belongs to the MCM family.

This is an uncharacterized protein from Methanocaldococcus jannaschii (strain ATCC 43067 / DSM 2661 / JAL-1 / JCM 10045 / NBRC 100440) (Methanococcus jannaschii).